Consider the following 220-residue polypeptide: Glycerol-3-phosphate acyltransferase (220 aa).

Helical transmembrane passes span 11–31, 70–90, 96–116, 127–147, 153–173, and 192–212; these read INVI…GYAL, LLVL…SKLF, LQWM…FLNF, GSVV…WFFV, ISSL…FFVP, and PMVL…FNLL.

Belongs to the PlsY family. In terms of assembly, probably interacts with PlsX.

The protein localises to the cell inner membrane. It carries out the reaction an acyl phosphate + sn-glycerol 3-phosphate = a 1-acyl-sn-glycero-3-phosphate + phosphate. The protein operates within lipid metabolism; phospholipid metabolism. In terms of biological role, catalyzes the transfer of an acyl group from acyl-phosphate (acyl-PO(4)) to glycerol-3-phosphate (G3P) to form lysophosphatidic acid (LPA). This enzyme utilizes acyl-phosphate as fatty acyl donor, but not acyl-CoA or acyl-ACP. The protein is Glycerol-3-phosphate acyltransferase of Helicobacter pylori (strain J99 / ATCC 700824) (Campylobacter pylori J99).